A 299-amino-acid polypeptide reads, in one-letter code: Probable 3-hydroxyisobutyrate dehydrogenase-like 2, mitochondrial (299 aa).

Residues 14–43 and Ser-108 each bind NAD(+); that span reads TRIG…TVYA. Lys-182 is a catalytic residue. Position 250 (Lys-250) interacts with NAD(+).

Belongs to the HIBADH-related family. 3-hydroxyisobutyrate dehydrogenase subfamily.

The protein localises to the mitochondrion. It catalyses the reaction 3-hydroxy-2-methylpropanoate + NAD(+) = 2-methyl-3-oxopropanoate + NADH + H(+). Its pathway is amino-acid degradation; L-valine degradation. This is Probable 3-hydroxyisobutyrate dehydrogenase-like 2, mitochondrial from Arabidopsis thaliana (Mouse-ear cress).